Here is a 201-residue protein sequence, read N- to C-terminus: Imidazole glycerol phosphate synthase subunit HisH 1 (201 aa).

One can recognise a Glutamine amidotransferase type-1 domain in the interval 1–201 (MIALIDYKAG…LKLLENFIRL (201 aa)). C80 acts as the Nucleophile in catalysis. Catalysis depends on residues H183 and E185.

As to quaternary structure, heterodimer of HisH and HisF.

Its subcellular location is the cytoplasm. The enzyme catalyses 5-[(5-phospho-1-deoxy-D-ribulos-1-ylimino)methylamino]-1-(5-phospho-beta-D-ribosyl)imidazole-4-carboxamide + L-glutamine = D-erythro-1-(imidazol-4-yl)glycerol 3-phosphate + 5-amino-1-(5-phospho-beta-D-ribosyl)imidazole-4-carboxamide + L-glutamate + H(+). The catalysed reaction is L-glutamine + H2O = L-glutamate + NH4(+). It participates in amino-acid biosynthesis; L-histidine biosynthesis; L-histidine from 5-phospho-alpha-D-ribose 1-diphosphate: step 5/9. Its function is as follows. IGPS catalyzes the conversion of PRFAR and glutamine to IGP, AICAR and glutamate. The HisH subunit provides the glutamine amidotransferase activity that produces the ammonia necessary to HisF for the synthesis of IGP and AICAR. The protein is Imidazole glycerol phosphate synthase subunit HisH 1 of Campylobacter jejuni (strain RM1221).